The chain runs to 355 residues: Cyanide hydratase (355 aa).

Residues 6 to 285 (YKAAAVTSEP…DGLLFVDIDL (280 aa)) enclose the CN hydrolase domain. Residue glutamate 46 is the Proton acceptor of the active site. The active site involves lysine 128. Cysteine 163 acts as the Nucleophile in catalysis.

Belongs to the carbon-nitrogen hydrolase superfamily. Nitrilase family. In terms of assembly, oligomer of dimers, forming left-handed helical fibers.

It catalyses the reaction formamide = hydrogen cyanide + H2O. Functionally, catalyzes the hydration of cyanide to formamide. Degradation of cyanide may be important for plant pathogenic fungi in infection of cyanogenic plants. The sequence is that of Cyanide hydratase from Gibberella zeae (strain ATCC MYA-4620 / CBS 123657 / FGSC 9075 / NRRL 31084 / PH-1) (Wheat head blight fungus).